We begin with the raw amino-acid sequence, 397 residues long: Elongation factor Tu (397 aa).

One can recognise a tr-type G domain in the interval 10–207 (KPHCNIGTIG…EVDKYIPQPE (198 aa)). Residues 19–26 (GHVDHGKT) are G1. 19–26 (GHVDHGKT) provides a ligand contact to GTP. Residue Thr26 participates in Mg(2+) binding. Positions 61 to 65 (GITIS) are G2. Positions 82 to 85 (DCPG) are G3. Residues 82 to 86 (DCPGH) and 137 to 140 (NKCD) each bind GTP. A G4 region spans residues 137–140 (NKCD). The interval 175-177 (SAL) is G5.

The protein belongs to the TRAFAC class translation factor GTPase superfamily. Classic translation factor GTPase family. EF-Tu/EF-1A subfamily. As to quaternary structure, monomer.

Its subcellular location is the cytoplasm. The enzyme catalyses GTP + H2O = GDP + phosphate + H(+). In terms of biological role, GTP hydrolase that promotes the GTP-dependent binding of aminoacyl-tRNA to the A-site of ribosomes during protein biosynthesis. The sequence is that of Elongation factor Tu from Azorhizobium caulinodans (strain ATCC 43989 / DSM 5975 / JCM 20966 / LMG 6465 / NBRC 14845 / NCIMB 13405 / ORS 571).